The following is a 99-amino-acid chain: Integration host factor subunit alpha (99 aa).

Residues 49–71 (FGNFDLRDKNQRPGRNPKTGEDI) are disordered.

The protein belongs to the bacterial histone-like protein family. Heterodimer of an alpha and a beta chain.

In terms of biological role, this protein is one of the two subunits of integration host factor, a specific DNA-binding protein that functions in genetic recombination as well as in transcriptional and translational control. In Shewanella denitrificans (strain OS217 / ATCC BAA-1090 / DSM 15013), this protein is Integration host factor subunit alpha.